Here is a 304-residue protein sequence, read N- to C-terminus: Uricase (304 aa).

At Ala2 the chain carries N-acetylalanine. N6-acetyllysine; alternate is present on residues Lys10 and Lys23. An N6-succinyllysine; alternate mark is found at Lys10 and Lys23. Lys23 functions as the Charge relay system in the catalytic mechanism. Residues Lys27 and Lys36 each carry the N6-acetyllysine modification. 2 positions are modified to phosphoserine: Ser39 and Ser63. Thr68 serves as the catalytic Charge relay system. The urate site is built by Thr68 and Asp69. An N6-acetyllysine mark is found at Lys118, Lys122, and Lys164. A urate-binding site is contributed by Phe170. N6-acetyllysine is present on residues Lys175 and Lys185. Arg187 is a binding site for urate. 2 positions are modified to N6-acetyllysine; alternate: Lys221 and Lys228. N6-succinyllysine; alternate occurs at positions 221 and 228. Ser232 is modified (phosphoserine). Residues Val235, Gln236, and Asn262 each coordinate urate. His264 functions as the Charge relay system in the catalytic mechanism. Lys278 carries the N6-acetyllysine modification. Tyr289 bears the Phosphotyrosine mark. The short motif at Ser302–Leu304 is the Microbody targeting signal element.

Belongs to the uricase family. Homotetramer.

It localises to the peroxisome. It carries out the reaction urate + O2 + H2O = 5-hydroxyisourate + H2O2. Its pathway is purine metabolism; urate degradation; (S)-allantoin from urate: step 1/3. Catalyzes the oxidation of uric acid to 5-hydroxyisourate, which is further processed to form (S)-allantoin. In Sus scrofa (Pig), this protein is Uricase (UOX).